Here is a 701-residue protein sequence, read N- to C-terminus: Polyribonucleotide nucleotidyltransferase (701 aa).

Aspartate 487 and aspartate 493 together coordinate Mg(2+). One can recognise a KH domain in the interval 554–613 (PTMIAMKIDTDKIRDVIGKGGATIRAICEETKASIDIEDDGSIKIFGETKEAADAAKQRI). Residues 623-691 (GKIYVGKVER…NRGRIKLSIK (69 aa)) enclose the S1 motif domain.

The protein belongs to the polyribonucleotide nucleotidyltransferase family. In terms of assembly, component of the RNA degradosome, which is a multiprotein complex involved in RNA processing and mRNA degradation. Mg(2+) serves as cofactor.

It is found in the cytoplasm. The enzyme catalyses RNA(n+1) + phosphate = RNA(n) + a ribonucleoside 5'-diphosphate. Involved in mRNA degradation. Catalyzes the phosphorolysis of single-stranded polyribonucleotides processively in the 3'- to 5'-direction. The sequence is that of Polyribonucleotide nucleotidyltransferase from Pseudomonas putida (Arthrobacter siderocapsulatus).